Here is a 495-residue protein sequence, read N- to C-terminus: Glutamate--tRNA ligase (495 aa).

A 'HIGH' region motif is present at residues 12–22 (PSPTGHLHIGN). A 'KMSKS' region motif is present at residues 259-263 (KLSKR). Lysine 262 is an ATP binding site.

The protein belongs to the class-I aminoacyl-tRNA synthetase family. Glutamate--tRNA ligase type 1 subfamily. In terms of assembly, monomer.

The protein resides in the cytoplasm. The enzyme catalyses tRNA(Glu) + L-glutamate + ATP = L-glutamyl-tRNA(Glu) + AMP + diphosphate. In terms of biological role, catalyzes the attachment of glutamate to tRNA(Glu) in a two-step reaction: glutamate is first activated by ATP to form Glu-AMP and then transferred to the acceptor end of tRNA(Glu). The protein is Glutamate--tRNA ligase of Ligilactobacillus salivarius (strain UCC118) (Lactobacillus salivarius).